A 568-amino-acid polypeptide reads, in one-letter code: NADH-ubiquinone oxidoreductase chain 5 (568 aa).

Transmembrane regions (helical) follow at residues 7-27, 44-64, 90-110, 144-164, 165-185, 210-232, 240-260, 274-294, 297-317, 334-354, 378-398, 426-446, 452-472, and 547-567; these read LGLLMLILTGYLFIFTGSSFG, FSFSFLLDNVSMIFVGTVLVI, WLFVLSMVFMILVPNLLMLLI, IGDVLVLISISIFLSEGGWLI, YSYHPVQMWLNLGFMVVFAGM, LVHSSTLVTAGVYLVLRSFYIIS, VLMILSLFTLVLAGSSAVFAF, LSLMMFSISILLPSVAFFHLV, AVFKALLFLGAGGVIHSNQSI, MGAMSVAIVSLSGAPFMSGFF, LLGLIFTSFYSARIVFSVMLG, AIILGVVLGSKMESFGFVVVL, LSVFFIPFAGLILWRGVISKL, and FTYQLVVWGLLVAGGVSLIIF.

The protein belongs to the complex I subunit 5 family.

It localises to the mitochondrion inner membrane. The catalysed reaction is a ubiquinone + NADH + 5 H(+)(in) = a ubiquinol + NAD(+) + 4 H(+)(out). Its function is as follows. Core subunit of the mitochondrial membrane respiratory chain NADH dehydrogenase (Complex I) that is believed to belong to the minimal assembly required for catalysis. Complex I functions in the transfer of electrons from NADH to the respiratory chain. The immediate electron acceptor for the enzyme is believed to be ubiquinone. This Mytilus edulis (Blue mussel) protein is NADH-ubiquinone oxidoreductase chain 5 (ND5).